We begin with the raw amino-acid sequence, 2774 residues long: Microtubule-associated protein 1A (2774 aa).

A phosphoserine mark is found at Ser114, Ser117, Ser118, Ser121, and Ser155. A Phosphotyrosine modification is found at Tyr177. The interval 310–329 (PSKIKHRADSKESLKAAPKT) is disordered. Phosphoserine occurs at positions 319 and 322. Repeat unit 1 spans residues 336 to 338 (KRE). Residues 336–541 (KREEVLEEGA…TQDFEELKRE (206 aa)) form an 11 X 3 AA repeats of K-K-[DE] region. Over residues 342-390 (EEGAKEARSELAKELAKTEKKAKEPSEKPPEKPSKSERVRGESSEALKA) the composition is skewed to basic and acidic residues. Disordered regions lie at residues 342-718 (EEGA…SFLS), 737-808 (TIPG…TELT), 845-939 (EDQS…VGKE), 957-1078 (FGAP…QTGC), 1093-1344 (ETGE…ILPE), 1357-1646 (QKDG…SPEQ), 1693-1725 (ESTFLDEGPDEQEITPLQHTPRSPWTSDFKDFQ), 1739-1843 (LAES…VPFS), and 1861-2644 (AELE…LVNG). Ser384 carries the phosphoserine modification. Basic residues predominate over residues 391–406 (EKRRLIKDKAGKKHLK). Basic and acidic residues-rich tracts occupy residues 407–464 (EKIS…KPDL) and 484–500 (VKVDKGRAARGEKELSS). Repeat copies occupy residues 415–417 (KKD), 420–422 (KKE), 424–426 (KKE), 427–429 (RKE), 431–433 (KKE), 436–438 (RKE), 440–442 (KKD), 444–446 (KKD), and 449–451 (RKD). Thr504 carries the post-translational modification Phosphothreonine. The segment covering 506 to 516 (PAQKGAAPPAA) has biased composition (low complexity). Phosphoserine occurs at positions 526 and 527. Basic and acidic residues-rich tracts occupy residues 536-554 (EELKREERGLLAEQRDTGL) and 584-595 (EGEHVEREKEVV). Repeat 11 spans residues 539-541 (KRE). Phosphoserine is present on residues Ser604 and Ser611. Composition is skewed to basic and acidic residues over residues 614-631 (EVEKEKETWEERKQREAE) and 638-675 (AAREESEAEVKEDVIEKAELEEMEETHPSDEEGEETKA). Ser643 carries the post-translational modification Phosphoserine. Thr663 is modified (phosphothreonine). A phosphoserine mark is found at Ser666, Ser677, Ser690, and Ser785. Polar residues-rich tracts occupy residues 845–858 (EDQSVASLTAPQTE) and 869–881 (TVTSIPSSRTEAT). 4 positions are modified to phosphoserine: Ser872, Ser875, Ser876, and Ser889. At Thr892 the chain carries Phosphothreonine. Phosphoserine occurs at positions 894, 898, 907, 980, 990, 998, 1007, 1013, 1022, 1029, 1037, 1061, 1132, 1134, 1148, 1160, 1178, 1188, 1191, 1197, 1206, and 1209. Residues 1008–1028 (PVEDKSEPRDFQEDSWGETKH) show a composition bias toward basic and acidic residues. Positions 1142–1157 (SVLSVVSPDTTKQEAT) are enriched in polar residues. Positions 1180 to 1190 (EDTQSLSFSEE) are enriched in polar residues. Over residues 1198 to 1212 (LDISSKQLSPESLGT) the composition is skewed to polar residues. The segment covering 1220-1236 (LGKEERGPVMKAEDDSC) has biased composition (basic and acidic residues). Ser1252, Ser1280, Ser1301, Ser1304, and Ser1307 each carry phosphoserine. Over residues 1293-1308 (TSDSSLTKSPESLSSP) the composition is skewed to low complexity. Composition is skewed to basic and acidic residues over residues 1317–1336 (WEGKAPGKEKEPELKSETRQ), 1357–1409 (QKDG…EDQG), 1416–1428 (AEKDKASEQRDTD), 1436–1479 (EPRD…EHSI), and 1487–1574 (RAPD…KADS). Phosphoserine occurs at positions 1504, 1568, 1574, and 1594. Over residues 1599-1613 (SKAREQEKKYWKEQD) the composition is skewed to basic and acidic residues. Phosphoserine occurs at positions 1622, 1643, 1715, 1742, 1757, 1763, and 1767. Residues 1707–1718 (TPLQHTPRSPWT) are compositionally biased toward polar residues. Phosphothreonine is present on Thr1772. 2 positions are modified to phosphoserine: Ser1778 and Ser1784. The span at 1789-1803 (TESTAPMRNEPTTPS) shows a compositional bias: polar residues. Over residues 1818-1839 (LPPAPLSPAPAPPTPAPEPHTP) the composition is skewed to pro residues. A compositionally biased stretch (basic and acidic residues) spans 1873-1885 (KDYRKAEGEREGE). Ser1897 carries the post-translational modification Phosphoserine. The segment covering 1908-1930 (ATRDTEQTEPEQREPTPYPDERS) has biased composition (basic and acidic residues). Thr1923 carries the post-translational modification Phosphothreonine. Residues 1984–1997 (SSPASPQNLQSDTP) are compositionally biased toward polar residues. A Phosphoserine modification is found at Ser1988. A compositionally biased stretch (pro residues) spans 2008–2034 (AVPPRQEPDPGPNVEPSITPPAVPPRA). Thr2026 bears the Phosphothreonine mark. A phosphoserine mark is found at Ser2043 and Ser2077. Positions 2055 to 2092 (PDRRTPSPKETGRGHWDDGTNDSDLEKGAREQPEKETR) are enriched in basic and acidic residues. Over residues 2115 to 2125 (SSLSSDSHLGS) the composition is skewed to low complexity. Residues 2144–2153 (PAPPQLPSPA) are compositionally biased toward pro residues. Ser2204, Ser2221, Ser2225, Ser2228, Ser2229, and Ser2260 each carry phosphoserine. The segment covering 2226–2237 (EGSSSEATTPVI) has biased composition (polar residues). Residues 2271–2287 (DLTPLSPAPSASLDLAP) show a composition bias toward low complexity. Over residues 2288–2298 (APAPAPAPAPG) the composition is skewed to pro residues. Over residues 2299–2309 (LPGDLGDGTLP) the composition is skewed to low complexity. Positions 2352-2364 (AEKEEAEAPHAWE) are enriched in basic and acidic residues. The residue at position 2424 (Ser2424) is a Phosphoserine. Residues 2477–2489 (SASDSGSSQSDSD) are compositionally biased toward low complexity. Pro residues predominate over residues 2534 to 2550 (DPPPTPLPDPRPSPPRP). Positions 2565–2575 (GRVERLREKGR) are enriched in basic and acidic residues. Residues 2613–2623 (RTVPRPRSTPS) are compositionally biased toward low complexity. Ser2620 and Ser2635 each carry phosphoserine.

Belongs to the MAP1 family. As to quaternary structure, 3 different light chains, LC1 (a cleavage product of MAP1B), LC2 (a cleavage product of MAP1A) and LC3 (produced by one of the MAP1LC3 genes), can associate with the MAP1A or MAP1B heavy chains. Interacts with guanylate kinase-like domain of DLG1, DLG2 and DLG4. Binds to CSNK1D. Interacts with TIAM2. In terms of assembly, interacts with ELAVL4. Post-translationally, phosphorylated by CSNK1D. In terms of processing, LC2 is generated from MAP1A by proteolytic processing. It is free to associate with both MAP1A and MAP1B. Brain, heart and muscle.

It is found in the cytoplasm. The protein localises to the cytoskeleton. Structural protein involved in the filamentous cross-bridging between microtubules and other skeletal elements. The polypeptide is Microtubule-associated protein 1A (Map1a) (Rattus norvegicus (Rat)).